The sequence spans 350 residues: Protein XRP2 (350 aa).

Basic residues predominate over residues 1–10; that stretch reads MGCFFSKRRK. The interval 1 to 31 is disordered; the sequence is MGCFFSKRRKADKESRPENEEERPKQYSWDQ. G2 carries the N-myristoyl glycine lipid modification. C3 carries the S-palmitoyl cysteine lipid modification. Over residues 11–31 the composition is skewed to basic and acidic residues; it reads ADKESRPENEEERPKQYSWDQ. One can recognise a C-CAP/cofactor C-like domain in the interval 24 to 179; that stretch reads PKQYSWDQRE…TWSNIHDFTP (156 aa). GTP-binding positions include 98–99 and 115–118; these read GS and QQFR.

This sequence belongs to the TBCC family. Found in a complex with ARL3, RP2 and UNC119 (or UNC119B); RP2 induces hydrolysis of GTP ARL3 in the complex, leading to the release of UNC119 (or UNC119B). Interacts with ARL3; interaction is direct and stimulated with the activated GTP-bound form of ARL3. In terms of processing, myristoylated on Gly-2; which may be required for membrane targeting. Post-translationally, palmitoylated on Cys-3; which may be required for plasma membrane targeting. Mutation of Cys-3 targets the protein to internal membranes. As to expression, ubiquitous. Expressed in the rod and cone photoreceptors, extending from the tips of the outer segment (OS) through the inner segment (IS) and outer nuclear layer (ONL) and into the synaptic terminals of the outer plexiform layer (ONL). Also detected in the bipolar, horizontal and amacrine cells in the inner nuclear layer (INL), extending to the inner plexiform layer (IPL) and though the ganglion cell layer (GCL) and into the nerve fiber layer (NFL) (at protein level).

It is found in the cell membrane. The protein resides in the cell projection. Its subcellular location is the cilium. Its function is as follows. Acts as a GTPase-activating protein (GAP) involved in trafficking between the Golgi and the ciliary membrane. Involved in localization of proteins, such as NPHP3, to the cilium membrane by inducing hydrolysis of GTP ARL3, leading to the release of UNC119 (or UNC119B). Acts as a GTPase-activating protein (GAP) for tubulin in concert with tubulin-specific chaperone C, but does not enhance tubulin heterodimerization. Acts as a guanine nucleotide dissociation inhibitor towards ADP-ribosylation factor-like proteins. The polypeptide is Protein XRP2 (RP2) (Homo sapiens (Human)).